We begin with the raw amino-acid sequence, 1679 residues long: Probable myosin heavy chain ECU04_1000 (1679 aa).

Polar residues predominate over residues 1-14 (MEGTTNKDIGSGSS). The interval 1 to 22 (MEGTTNKDIGSGSSRPGGEVSV) is disordered. In terms of domain architecture, Myosin N-terminal SH3-like spans 31–79 (MEKKWVWAPSSKEAYVCGFVVKEEGDVLEIDCRGVIVRHKSCEVFRMNP). The region spanning 83 to 754 (DMVDDLAELS…VLADIEDMRD (672 aa)) is the Myosin motor domain. Residue 176–183 (GESGAGKT) coordinates ATP. Residues 624 to 646 (LASLMSELRRTNPHFVRCIIPNL) are actin-binding. A coiled-coil region spans residues 823–1644 (GEMKEKEAMI…SKMLEMKKKL (822 aa)).

It belongs to the TRAFAC class myosin-kinesin ATPase superfamily. Myosin family.

Its function is as follows. Cellular myosin that appears to play a role in cytokinesis, cell shape, and specialized functions such as secretion and capping. This chain is Probable myosin heavy chain ECU04_1000, found in Encephalitozoon cuniculi (strain GB-M1) (Microsporidian parasite).